The sequence spans 489 residues: Adenosylhomocysteinase (489 aa).

The substrate site is built by Thr68, Asp151, and Glu213. Residue 214–216 (TTT) coordinates NAD(+). Residues Lys243 and Asp247 each contribute to the substrate site. Residues Asn248, 277–282 (GYGDVG), Glu300, Asn335, 356–358 (IGH), and Asn403 each bind NAD(+).

It belongs to the adenosylhomocysteinase family. The cofactor is NAD(+).

Its subcellular location is the cytoplasm. It carries out the reaction S-adenosyl-L-homocysteine + H2O = L-homocysteine + adenosine. The protein operates within amino-acid biosynthesis; L-homocysteine biosynthesis; L-homocysteine from S-adenosyl-L-homocysteine: step 1/1. Functionally, may play a key role in the regulation of the intracellular concentration of adenosylhomocysteine. The sequence is that of Adenosylhomocysteinase from Mycobacterium sp. (strain JLS).